The sequence spans 331 residues: Lipoyl synthase (331 aa).

[4Fe-4S] cluster is bound by residues cysteine 57, cysteine 62, cysteine 68, cysteine 83, cysteine 87, cysteine 90, and serine 294. The Radical SAM core domain maps to 69-283; it reads WEDREATFLI…KAEAEAIGFL (215 aa).

It belongs to the radical SAM superfamily. Lipoyl synthase family. The cofactor is [4Fe-4S] cluster.

The protein resides in the cytoplasm. It carries out the reaction [[Fe-S] cluster scaffold protein carrying a second [4Fe-4S](2+) cluster] + N(6)-octanoyl-L-lysyl-[protein] + 2 oxidized [2Fe-2S]-[ferredoxin] + 2 S-adenosyl-L-methionine + 4 H(+) = [[Fe-S] cluster scaffold protein] + N(6)-[(R)-dihydrolipoyl]-L-lysyl-[protein] + 4 Fe(3+) + 2 hydrogen sulfide + 2 5'-deoxyadenosine + 2 L-methionine + 2 reduced [2Fe-2S]-[ferredoxin]. The protein operates within protein modification; protein lipoylation via endogenous pathway; protein N(6)-(lipoyl)lysine from octanoyl-[acyl-carrier-protein]: step 2/2. Catalyzes the radical-mediated insertion of two sulfur atoms into the C-6 and C-8 positions of the octanoyl moiety bound to the lipoyl domains of lipoate-dependent enzymes, thereby converting the octanoylated domains into lipoylated derivatives. The sequence is that of Lipoyl synthase from Clavibacter michiganensis subsp. michiganensis (strain NCPPB 382).